A 339-amino-acid chain; its full sequence is Glycerol-3-phosphate dehydrogenase [NAD(P)+] (339 aa).

NADPH-binding residues include Ser-15, Tyr-16, His-36, and Lys-110. Residues Lys-110, Gly-139, and Thr-141 each coordinate sn-glycerol 3-phosphate. Residue Ala-143 coordinates NADPH. Positions 195, 248, 258, 259, and 260 each coordinate sn-glycerol 3-phosphate. The active-site Proton acceptor is the Lys-195. Arg-259 serves as a coordination point for NADPH. NADPH is bound by residues Val-283 and Glu-285.

This sequence belongs to the NAD-dependent glycerol-3-phosphate dehydrogenase family.

The protein resides in the cytoplasm. It catalyses the reaction sn-glycerol 3-phosphate + NAD(+) = dihydroxyacetone phosphate + NADH + H(+). The catalysed reaction is sn-glycerol 3-phosphate + NADP(+) = dihydroxyacetone phosphate + NADPH + H(+). Its pathway is membrane lipid metabolism; glycerophospholipid metabolism. Its function is as follows. Catalyzes the reduction of the glycolytic intermediate dihydroxyacetone phosphate (DHAP) to sn-glycerol 3-phosphate (G3P), the key precursor for phospholipid synthesis. This chain is Glycerol-3-phosphate dehydrogenase [NAD(P)+], found in Yersinia pseudotuberculosis serotype O:1b (strain IP 31758).